A 48-amino-acid polypeptide reads, in one-letter code: Toxin CSTX-14 (48 aa).

4 disulfides stabilise this stretch: C3/C18, C10/C27, C17/C42, and C29/C40.

This sequence belongs to the neurotoxin 19 (CSTX) family. 12 subfamily. As to quaternary structure, heterodimer of A and B chains; disulfide-linked. Post-translationally, contains 4 disulfide bonds. In terms of tissue distribution, expressed by the venom gland.

It is found in the secreted. This is Toxin CSTX-14 from Cupiennius salei (American wandering spider).